The chain runs to 90 residues: MNKTQLIDVIADKADLSKAQAKLALESTLAAITESLKEGDAVQLVGFGTFKVNHRSERTGRNPQTGKEIKIAAANVPAFVSGKALKDAVK.

Belongs to the bacterial histone-like protein family. As to quaternary structure, heterodimer of an alpha and a beta chain.

In terms of biological role, histone-like DNA-binding protein which is capable of wrapping DNA to stabilize it, and thus to prevent its denaturation under extreme environmental conditions. The protein is DNA-binding protein HU-alpha (hupA) of Serratia marcescens.